Reading from the N-terminus, the 130-residue chain is MAQVEYRGTGRRKNSVARVRLVPGEGNITVNGKDVREYLPFESLILDLNQPFEVTETKGNYDVLVNVHGGGFTGQAQAIRHGIARALLEADPEYRSSLKRAGLLTRDPRMKERKKPGLKKARRSPQFSKR.

The segment at 98 to 130 (LKRAGLLTRDPRMKERKKPGLKKARRSPQFSKR) is disordered. Residues 111 to 130 (KERKKPGLKKARRSPQFSKR) show a composition bias toward basic residues.

The protein belongs to the universal ribosomal protein uS9 family.

This is Small ribosomal subunit protein uS9 (rpsI) from Staphylococcus carnosus (strain TM300).